Consider the following 156-residue polypeptide: Small ribosomal subunit protein uS7 (156 aa).

It belongs to the universal ribosomal protein uS7 family. In terms of assembly, part of the 30S ribosomal subunit. Contacts proteins S9 and S11.

Its function is as follows. One of the primary rRNA binding proteins, it binds directly to 16S rRNA where it nucleates assembly of the head domain of the 30S subunit. Is located at the subunit interface close to the decoding center, probably blocks exit of the E-site tRNA. The sequence is that of Small ribosomal subunit protein uS7 from Methylibium petroleiphilum (strain ATCC BAA-1232 / LMG 22953 / PM1).